A 518-amino-acid polypeptide reads, in one-letter code: Probable bifunctional methylthioribulose-1-phosphate dehydratase/enolase-phosphatase E1 (518 aa).

Positions 1–247 (MAAAPPAVAV…AIKLHQIGLD (247 aa)) are methylthioribulose-1-phosphate dehydratase. C119 is a binding site for substrate. Zn(2+) contacts are provided by H137 and H139. E162 functions as the Proton donor/acceptor; for methylthioribulose-1-phosphate dehydratase activity in the catalytic mechanism. H212 contacts Zn(2+). The segment at 279-518 (IVLDIEGTTT…FKTITSFAEI (240 aa)) is enolase-phosphatase E1. Positions 282 and 284 each coordinate Mg(2+). Residues 417 to 418 (SS) and K451 each bind substrate. Position 477 (D477) interacts with Mg(2+).

The protein in the N-terminal section; belongs to the aldolase class II family. MtnB subfamily. This sequence in the C-terminal section; belongs to the HAD-like hydrolase superfamily. MasA/MtnC family. Zn(2+) is required as a cofactor. Requires Mg(2+) as cofactor.

The enzyme catalyses 5-(methylsulfanyl)-D-ribulose 1-phosphate = 5-methylsulfanyl-2,3-dioxopentyl phosphate + H2O. The catalysed reaction is 5-methylsulfanyl-2,3-dioxopentyl phosphate + H2O = 1,2-dihydroxy-5-(methylsulfanyl)pent-1-en-3-one + phosphate. It participates in amino-acid biosynthesis; L-methionine biosynthesis via salvage pathway; L-methionine from S-methyl-5-thio-alpha-D-ribose 1-phosphate: step 2/6. The protein operates within amino-acid biosynthesis; L-methionine biosynthesis via salvage pathway; L-methionine from S-methyl-5-thio-alpha-D-ribose 1-phosphate: step 3/6. Its pathway is amino-acid biosynthesis; L-methionine biosynthesis via salvage pathway; L-methionine from S-methyl-5-thio-alpha-D-ribose 1-phosphate: step 4/6. The sequence is that of Probable bifunctional methylthioribulose-1-phosphate dehydratase/enolase-phosphatase E1 from Populus trichocarpa (Western balsam poplar).